Reading from the N-terminus, the 215-residue chain is MRTGIIAQKIGMTSVFNDKGERIPLTLVKVDDCQVVGHKTLEKHGYNALVIGIKDKKISRVTKPMKQVFANAKISPKTKLKEFRISEGNFIDIAANLEVDHFMAGQFVDITATTIGKGFAGSMKRHNFRGLEASHGVSISHRSHGSTGQRQDPGKVFKGKKMAGHMGCNQVTIQNLKIFAVDRERKLIMIRGSIPGHKNSYLSIKDAVKKNSITV.

The tract at residues 136–161 (GVSISHRSHGSTGQRQDPGKVFKGKK) is disordered. Q151 carries the post-translational modification N5-methylglutamine.

Belongs to the universal ribosomal protein uL3 family. Part of the 50S ribosomal subunit. Forms a cluster with proteins L14 and L19. Post-translationally, methylated by PrmB.

Its function is as follows. One of the primary rRNA binding proteins, it binds directly near the 3'-end of the 23S rRNA, where it nucleates assembly of the 50S subunit. This chain is Large ribosomal subunit protein uL3, found in Rickettsia akari (strain Hartford).